We begin with the raw amino-acid sequence, 378 residues long: Chaperone protein DnaJ 2 (378 aa).

Residues 4–68 form the J domain; it reads DYYAVLGVRR…QKKQVYDLGG (65 aa). The CR-type zinc finger occupies 130–212; that stretch reads GTTKDIQVET…CAGDGRVRSR (83 aa). Residues Cys-143, Cys-146, Cys-160, Cys-163, Cys-186, Cys-189, Cys-200, and Cys-203 each contribute to the Zn(2+) site. CXXCXGXG motif repeat units lie at residues 143–150, 160–167, 186–193, and 200–207; these read CTTCSGEG, CDMCRGRG, CPQCQGFG, and CPECAGDG. The interval 351-378 is disordered; it reads RGEERPTGQFQPGQQGLFSRLKDAFNGR. Residues 358–367 show a composition bias toward polar residues; the sequence is GQFQPGQQGL.

This sequence belongs to the DnaJ family. In terms of assembly, homodimer. The cofactor is Zn(2+).

The protein resides in the cytoplasm. In terms of biological role, participates actively in the response to hyperosmotic and heat shock by preventing the aggregation of stress-denatured proteins and by disaggregating proteins, also in an autonomous, DnaK-independent fashion. Unfolded proteins bind initially to DnaJ; upon interaction with the DnaJ-bound protein, DnaK hydrolyzes its bound ATP, resulting in the formation of a stable complex. GrpE releases ADP from DnaK; ATP binding to DnaK triggers the release of the substrate protein, thus completing the reaction cycle. Several rounds of ATP-dependent interactions between DnaJ, DnaK and GrpE are required for fully efficient folding. Also involved, together with DnaK and GrpE, in the DNA replication of plasmids through activation of initiation proteins. The chain is Chaperone protein DnaJ 2 from Streptomyces avermitilis (strain ATCC 31267 / DSM 46492 / JCM 5070 / NBRC 14893 / NCIMB 12804 / NRRL 8165 / MA-4680).